A 335-amino-acid chain; its full sequence is Acetyl-coenzyme A carboxylase carboxyl transferase subunit alpha (335 aa).

Positions 38-292 constitute a CoA carboxyltransferase C-terminal domain; it reads TLEQKAEELR…ATALSEEIEN (255 aa).

Belongs to the AccA family. As to quaternary structure, acetyl-CoA carboxylase is a heterohexamer composed of biotin carboxyl carrier protein (AccB), biotin carboxylase (AccC) and two subunits each of ACCase subunit alpha (AccA) and ACCase subunit beta (AccD).

The protein resides in the cytoplasm. It carries out the reaction N(6)-carboxybiotinyl-L-lysyl-[protein] + acetyl-CoA = N(6)-biotinyl-L-lysyl-[protein] + malonyl-CoA. It functions in the pathway lipid metabolism; malonyl-CoA biosynthesis; malonyl-CoA from acetyl-CoA: step 1/1. Its function is as follows. Component of the acetyl coenzyme A carboxylase (ACC) complex. First, biotin carboxylase catalyzes the carboxylation of biotin on its carrier protein (BCCP) and then the CO(2) group is transferred by the carboxyltransferase to acetyl-CoA to form malonyl-CoA. In Heliobacterium modesticaldum (strain ATCC 51547 / Ice1), this protein is Acetyl-coenzyme A carboxylase carboxyl transferase subunit alpha.